Consider the following 349-residue polypeptide: tRNA pseudouridine synthase D (349 aa).

Residue Phe27 coordinates substrate. The Nucleophile role is filled by Asp80. Asn129 is a substrate binding site. A TRUD domain is found at Gly155–Leu303. Position 329 (Phe329) interacts with substrate.

Belongs to the pseudouridine synthase TruD family.

It catalyses the reaction uridine(13) in tRNA = pseudouridine(13) in tRNA. Functionally, responsible for synthesis of pseudouridine from uracil-13 in transfer RNAs. In Escherichia coli O127:H6 (strain E2348/69 / EPEC), this protein is tRNA pseudouridine synthase D.